The following is a 595-amino-acid chain: DNA mismatch repair protein MutL (595 aa).

Belongs to the DNA mismatch repair MutL/HexB family.

This protein is involved in the repair of mismatches in DNA. It is required for dam-dependent methyl-directed DNA mismatch repair. May act as a 'molecular matchmaker', a protein that promotes the formation of a stable complex between two or more DNA-binding proteins in an ATP-dependent manner without itself being part of a final effector complex. This chain is DNA mismatch repair protein MutL, found in Rhodopseudomonas palustris (strain ATCC BAA-98 / CGA009).